The sequence spans 941 residues: Translation initiation factor IF-2 (941 aa).

Disordered stretches follow at residues 61–204 (IQSN…RREN) and 249–274 (QEKD…KNNK). The span at 147–163 (EKAKQKLQEIQKSREAL) shows a compositional bias: basic and acidic residues. The segment covering 164–179 (NKLTQSNTNNANNANS) has biased composition (low complexity). Basic and acidic residues predominate over residues 180 to 204 (AKKEISEVAKQEREQEHLDNKRREN). The region spanning 440 to 609 (ERPPVVTIMG…LIQADIMELK (170 aa)) is the tr-type G domain. The tract at residues 449–456 (GHVDHGKT) is G1. 449 to 456 (GHVDHGKT) provides a ligand contact to GTP. The G2 stretch occupies residues 474-478 (GITQH). A G3 region spans residues 495 to 498 (DTPG). GTP contacts are provided by residues 495–499 (DTPGH) and 549–552 (NKMD). The G4 stretch occupies residues 549 to 552 (NKMD). The segment at 585–587 (SAK) is G5.

This sequence belongs to the TRAFAC class translation factor GTPase superfamily. Classic translation factor GTPase family. IF-2 subfamily.

It localises to the cytoplasm. Its function is as follows. One of the essential components for the initiation of protein synthesis. Protects formylmethionyl-tRNA from spontaneous hydrolysis and promotes its binding to the 30S ribosomal subunits. Also involved in the hydrolysis of GTP during the formation of the 70S ribosomal complex. In Helicobacter acinonychis (strain Sheeba), this protein is Translation initiation factor IF-2.